Reading from the N-terminus, the 229-residue chain is Large ribosomal subunit protein uL1 (229 aa).

It belongs to the universal ribosomal protein uL1 family. In terms of assembly, part of the 50S ribosomal subunit.

Binds directly to 23S rRNA. The L1 stalk is quite mobile in the ribosome, and is involved in E site tRNA release. In terms of biological role, protein L1 is also a translational repressor protein, it controls the translation of the L11 operon by binding to its mRNA. In Streptococcus pyogenes serotype M3 (strain SSI-1), this protein is Large ribosomal subunit protein uL1.